Here is a 377-residue protein sequence, read N- to C-terminus: N-acetyldiaminopimelate deacetylase (377 aa).

Asp70 is an active-site residue. The active-site Proton acceptor is the Glu129.

Belongs to the peptidase M20A family. N-acetyldiaminopimelate deacetylase subfamily.

The enzyme catalyses N-acetyl-(2S,6S)-2,6-diaminopimelate + H2O = (2S,6S)-2,6-diaminopimelate + acetate. It participates in amino-acid biosynthesis; L-lysine biosynthesis via DAP pathway; LL-2,6-diaminopimelate from (S)-tetrahydrodipicolinate (acetylase route): step 3/3. Its function is as follows. Catalyzes the conversion of N-acetyl-diaminopimelate to diaminopimelate and acetate. This is N-acetyldiaminopimelate deacetylase from Streptococcus thermophilus (strain CNRZ 1066).